Here is a 265-residue protein sequence, read N- to C-terminus: Tryptophan synthase alpha chain (265 aa).

Catalysis depends on proton acceptor residues E49 and D60.

The protein belongs to the TrpA family. As to quaternary structure, tetramer of two alpha and two beta chains.

The enzyme catalyses (1S,2R)-1-C-(indol-3-yl)glycerol 3-phosphate + L-serine = D-glyceraldehyde 3-phosphate + L-tryptophan + H2O. Its pathway is amino-acid biosynthesis; L-tryptophan biosynthesis; L-tryptophan from chorismate: step 5/5. Its function is as follows. The alpha subunit is responsible for the aldol cleavage of indoleglycerol phosphate to indole and glyceraldehyde 3-phosphate. This chain is Tryptophan synthase alpha chain, found in Cupriavidus metallidurans (strain ATCC 43123 / DSM 2839 / NBRC 102507 / CH34) (Ralstonia metallidurans).